We begin with the raw amino-acid sequence, 202 residues long: uncharacterized protein (202 aa).

The protein resides in the mitochondrion. This is an uncharacterized protein from Schizosaccharomyces pombe (strain 972 / ATCC 24843) (Fission yeast).